The sequence spans 98 residues: Protein translation factor SUI1 homolog (98 aa).

The protein belongs to the SUI1 family.

The sequence is that of Protein translation factor SUI1 homolog from Thermococcus kodakarensis (strain ATCC BAA-918 / JCM 12380 / KOD1) (Pyrococcus kodakaraensis (strain KOD1)).